We begin with the raw amino-acid sequence, 567 residues long: MDDSSINKELKQKLNVSYCEEESESEGQKEAPESRETQSQTPDWAEGQESEAKFTPPRTPSSSIHGVGTFEEKDKMSPDQALRTPGPGFHKCPGTPAQPDSRSEVVHCESPYTPKSLLSQSVISSTEKLPSRGSKHLRFTPVPFVDEMTSSALVNINPFTPESYRKQFLRSNGKRKTRGDLEEADPGEGKVEQGLPAKRCVLRETNMASRYEKEFLEVEKIGVGEFGTVYKCIKRLDGCVYAIKRSMKPVAGLSNENLALHEVYAHAVLGHHPHVVRYYSAWAEDDHMIIQNEYCNGGSLQTAISENTKSGNHFPELKLKDILLQISLGLKYIHNSGMVHLDIKPSNIFICHKMQCDSPVVPEEIENEADWFLSANVMYKIAGDLGHVTSISKPKVEEGDSRFLANEILQEDYQHLPKADIFALGLTIAVAAGAESLPANGAKWHHIREGNLPDIPQKLSEEFHNLLKNMIHPDPSERPSAAGLARSRVLRPSLRKAEELQQQLNLEKSKTATLERELREAQQAWSPQEEHSDPGVSGTPTGSRCTKRPVGGKSAKSSSFTCGKSSP.

Basic and acidic residues-rich tracts occupy residues 1 to 12 (MDDSSINKELKQ) and 26 to 36 (EGQKEAPESRE). Disordered stretches follow at residues 1-103 (MDDS…DSRS) and 170-191 (RSNG…EGKV). Ser77 carries the phosphoserine modification. Positions 174–176 (KRK) match the Nuclear localization signal motif. The 280-residue stretch at 215 to 494 (FLEVEKIGVG…ARSRVLRPSL (280 aa)) folds into the Protein kinase domain. ATP is bound by residues 221–229 (IGVGEFGTV) and Lys244. Residues 318-332 (KLKDILLQISLGLKY) carry the Nuclear export signal motif. Asp342 functions as the Proton acceptor in the catalytic mechanism. Mg(2+) contacts are provided by Asn347 and Asp384. Residues 497-523 (AEELQQQLNLEKSKTATLERELREAQQ) adopt a coiled-coil conformation. The segment at 502–567 (QQLNLEKSKT…SSFTCGKSSP (66 aa)) is disordered. Residues 507-520 (EKSKTATLERELRE) are compositionally biased toward basic and acidic residues. Polar residues predominate over residues 555–567 (AKSSSFTCGKSSP).

It belongs to the protein kinase superfamily. Ser/Thr protein kinase family. WEE1 subfamily. In terms of processing, phosphorylation leads to increase its activity.

Its subcellular location is the nucleus. It carries out the reaction L-tyrosyl-[protein] + ATP = O-phospho-L-tyrosyl-[protein] + ADP + H(+). In terms of biological role, oocyte-specific protein tyrosine kinase that phosphorylates and inhibits CDK1 and acts as a key regulator of meiosis during both prophase I and metaphase II. Required to maintain meiotic arrest in oocytes during the germinal vesicle (GV) stage, a long period of quiescence at dictyate prophase I, by phosphorylating CDK1 at 'Tyr-15', leading to inhibit CDK1 activity and prevent meiotic reentry. Also required for metaphase II exit during egg activation by phosphorylating CDK1 at 'Tyr-15', to ensure exit from meiosis in oocytes and promote pronuclear formation. The chain is Wee1-like protein kinase 2 (WEE2) from Canis lupus familiaris (Dog).